Reading from the N-terminus, the 626-residue chain is Chaperone protein DnaK (626 aa).

Phosphothreonine; by autocatalysis is present on Thr-175. Low complexity predominate over residues 586–606 (GAEGAAAGADGAGASAGSASG). Positions 586 to 626 (GAEGAAAGADGAGASAGSASGSDDDTVEAEVVDDDDDKDNK) are disordered. Over residues 607–626 (SDDDTVEAEVVDDDDDKDNK) the composition is skewed to acidic residues.

Belongs to the heat shock protein 70 family.

Its function is as follows. Acts as a chaperone. In Bifidobacterium longum (strain DJO10A), this protein is Chaperone protein DnaK.